Reading from the N-terminus, the 223-residue chain is Endonuclease V (223 aa).

Mg(2+) is bound by residues Asp-35 and Asp-103.

Belongs to the endonuclease V family. Mg(2+) serves as cofactor.

It localises to the cytoplasm. The catalysed reaction is Endonucleolytic cleavage at apurinic or apyrimidinic sites to products with a 5'-phosphate.. Its function is as follows. DNA repair enzyme involved in the repair of deaminated bases. Selectively cleaves double-stranded DNA at the second phosphodiester bond 3' to a deoxyinosine leaving behind the intact lesion on the nicked DNA. This is Endonuclease V from Shigella dysenteriae serotype 1 (strain Sd197).